Reading from the N-terminus, the 325-residue chain is MKVNLDRTSSGFCIGVQGTIHLAEEKLREHDGKLYCLGDIVHNEVEVKRLEELGLITIDLNEYSALTNAPVLIRAHGEPPSTYTTAKSNQLDVTDSTCPVVAKLQRSARMLHNRGYQIIIYGKKNHPEVIGINGQCDNQAIIIKHPDLSAPEETAPLDFTRRTALISQTTMDVPGFAMLKENLERLFSASAGPGERHAASHWQDIRDIDLTAEITGVRPLPKFLYKDTICRQVSSRNSKLHDFAAQNDVVIFVAGKKSSNGQVLFNICKASNPRTYFAEDEKDIQDEWLLENRQPVQSAGVCGATSTPMWLLEKVARSIESRFSS.

A [4Fe-4S] cluster-binding site is contributed by cysteine 13. (2E)-4-hydroxy-3-methylbut-2-enyl diphosphate contacts are provided by histidine 42 and histidine 76. The dimethylallyl diphosphate site is built by histidine 42 and histidine 76. Histidine 42 and histidine 76 together coordinate isopentenyl diphosphate. Cysteine 98 is a [4Fe-4S] cluster binding site. Histidine 126 serves as a coordination point for (2E)-4-hydroxy-3-methylbut-2-enyl diphosphate. Dimethylallyl diphosphate is bound at residue histidine 126. Residue histidine 126 coordinates isopentenyl diphosphate. Catalysis depends on glutamate 128, which acts as the Proton donor. Position 169 (threonine 169) interacts with (2E)-4-hydroxy-3-methylbut-2-enyl diphosphate. Position 230 (cysteine 230) interacts with [4Fe-4S] cluster. (2E)-4-hydroxy-3-methylbut-2-enyl diphosphate-binding residues include serine 258, serine 259, asparagine 260, and serine 306. Positions 258, 259, 260, and 306 each coordinate dimethylallyl diphosphate. Serine 258, serine 259, asparagine 260, and serine 306 together coordinate isopentenyl diphosphate.

This sequence belongs to the IspH family. It depends on [4Fe-4S] cluster as a cofactor.

It catalyses the reaction isopentenyl diphosphate + 2 oxidized [2Fe-2S]-[ferredoxin] + H2O = (2E)-4-hydroxy-3-methylbut-2-enyl diphosphate + 2 reduced [2Fe-2S]-[ferredoxin] + 2 H(+). It carries out the reaction dimethylallyl diphosphate + 2 oxidized [2Fe-2S]-[ferredoxin] + H2O = (2E)-4-hydroxy-3-methylbut-2-enyl diphosphate + 2 reduced [2Fe-2S]-[ferredoxin] + 2 H(+). The protein operates within isoprenoid biosynthesis; dimethylallyl diphosphate biosynthesis; dimethylallyl diphosphate from (2E)-4-hydroxy-3-methylbutenyl diphosphate: step 1/1. It participates in isoprenoid biosynthesis; isopentenyl diphosphate biosynthesis via DXP pathway; isopentenyl diphosphate from 1-deoxy-D-xylulose 5-phosphate: step 6/6. In terms of biological role, catalyzes the conversion of 1-hydroxy-2-methyl-2-(E)-butenyl 4-diphosphate (HMBPP) into a mixture of isopentenyl diphosphate (IPP) and dimethylallyl diphosphate (DMAPP). Acts in the terminal step of the DOXP/MEP pathway for isoprenoid precursor biosynthesis. The chain is 4-hydroxy-3-methylbut-2-enyl diphosphate reductase from Prosthecochloris aestuarii (strain DSM 271 / SK 413).